The chain runs to 306 residues: MERLQRLMMNTKVGAADANKDDTKETVYISSIALLKMLKHGRAGVPMEVMGLMLGEFVDEYTVNVVDVFAMPQSGTGVSVEAVDDVFQARMMDMLKQTGRDQMVVGWYHSHPGFGCWLSSVDVNTQKSFEQLNNRAVAVVVDPIQSVKGKVVIDAFRLIDTGALINNQEPRQTTSNSGLMNKANIQALIHGLNRHYYSLNIDYHKTPAETKMLLNLHKEQWQSGLKMQDYQEKETENLEATKRMVAVAQQYSKRIEEEKELSEEELKTRYVGKQDPKKHLAKTAENTLEENTVSVLTAGVNSIAIK.

Residues 27–162 (VYISSIALLK…IDAFRLIDTG (136 aa)) enclose the MPN domain. Zn(2+) is bound by residues His-109, His-111, and Asp-122. The JAMM motif signature appears at 109–122 (HSHPGFGCWLSSVD).

Belongs to the peptidase M67A family.

Its function is as follows. Acts as a regulatory subunit of the 26 proteasome which is involved in the ATP-dependent degradation of ubiquitinated proteins. In Candida glabrata (strain ATCC 2001 / BCRC 20586 / JCM 3761 / NBRC 0622 / NRRL Y-65 / CBS 138) (Yeast), this protein is 26S proteasome regulatory subunit RPN11 (RPN11).